The chain runs to 280 residues: 3-methyl-2-oxobutanoate hydroxymethyltransferase (280 aa).

2 residues coordinate Mg(2+): aspartate 60 and aspartate 99. 3-methyl-2-oxobutanoate is bound by residues 60-61 (DS), aspartate 99, and lysine 129. Glutamate 131 serves as a coordination point for Mg(2+). The active-site Proton acceptor is the glutamate 198.

It belongs to the PanB family. As to quaternary structure, homodecamer; pentamer of dimers. Requires Mg(2+) as cofactor.

The protein localises to the cytoplasm. The catalysed reaction is 3-methyl-2-oxobutanoate + (6R)-5,10-methylene-5,6,7,8-tetrahydrofolate + H2O = 2-dehydropantoate + (6S)-5,6,7,8-tetrahydrofolate. Its pathway is cofactor biosynthesis; (R)-pantothenate biosynthesis; (R)-pantoate from 3-methyl-2-oxobutanoate: step 1/2. Functionally, catalyzes the reversible reaction in which hydroxymethyl group from 5,10-methylenetetrahydrofolate is transferred onto alpha-ketoisovalerate to form ketopantoate. The chain is 3-methyl-2-oxobutanoate hydroxymethyltransferase from Thermobifida fusca (strain YX).